We begin with the raw amino-acid sequence, 278 residues long: Elongation factor Ts (278 aa).

The involved in Mg(2+) ion dislocation from EF-Tu stretch occupies residues 80-83; that stretch reads TDFV.

It belongs to the EF-Ts family.

It localises to the cytoplasm. In terms of biological role, associates with the EF-Tu.GDP complex and induces the exchange of GDP to GTP. It remains bound to the aminoacyl-tRNA.EF-Tu.GTP complex up to the GTP hydrolysis stage on the ribosome. This Arthrobacter sp. (strain FB24) protein is Elongation factor Ts.